A 221-amino-acid polypeptide reads, in one-letter code: Transcription antitermination protein NusB (221 aa).

This sequence belongs to the NusB family.

In terms of biological role, involved in transcription antitermination. Required for transcription of ribosomal RNA (rRNA) genes. Binds specifically to the boxA antiterminator sequence of the ribosomal RNA (rrn) operons. This chain is Transcription antitermination protein NusB, found in Synechocystis sp. (strain ATCC 27184 / PCC 6803 / Kazusa).